Reading from the N-terminus, the 420-residue chain is Deoxyribodipyrimidine photo-lyase (420 aa).

A Photolyase/cryptochrome alpha/beta domain is found at 2–124; it reads GPLLVWHRGD…PLHLLPAPHL (123 aa). The disordered stretch occupies residues 147–176; that stretch reads APPLPPPEALPKGPEEGEIPREDPGLPLPE. Over residues 159 to 170 the composition is skewed to basic and acidic residues; the sequence is GPEEGEIPREDP. Tyr197 provides a ligand contact to FAD. Position 201 (Arg201) interacts with DNA. FAD-binding positions include 209 to 213, Trp241, Arg248, Asn310, and 341 to 343; these read GSRLS and DGD. Interaction with DNA regions lie at residues 244–251 and 310–311; these read ELLWRDFS and NR. A DNA-binding site is contributed by Gln373.

It belongs to the DNA photolyase class-1 family. As to quaternary structure, monomer. Requires FAD as cofactor.

The catalysed reaction is cyclobutadipyrimidine (in DNA) = 2 pyrimidine residues (in DNA).. Its function is as follows. Involved in repair of UV radiation-induced DNA damage. Catalyzes the light-dependent monomerization (300-600 nm) of cyclobutyl pyrimidine dimers (in cis-syn configuration), which are formed between adjacent bases on the same DNA strand upon exposure to ultraviolet radiation. This chain is Deoxyribodipyrimidine photo-lyase (phr), found in Thermus thermophilus (strain ATCC 27634 / DSM 579 / HB8).